The sequence spans 485 residues: Alpha,alpha-trehalose-phosphate synthase [UDP-forming] (485 aa).

Residues Tyr99 and Asp153 each coordinate D-glucose 6-phosphate. Residues Arg290 and Lys295 each coordinate UDP. UDP-alpha-D-glucose is bound by residues Arg290 and Lys295. Arg328 provides a ligand contact to D-glucose 6-phosphate. Residues Ile367 and 393–397 each bind UDP; that span reads LVSYE. Residues Ile367 and 389 to 397 contribute to the UDP-alpha-D-glucose site; that span reads DGMNLVSYE.

This sequence belongs to the glycosyltransferase 20 family.

It carries out the reaction D-glucose 6-phosphate + UDP-alpha-D-glucose = alpha,alpha-trehalose 6-phosphate + UDP + H(+). Its pathway is carbohydrate biosynthesis. Its function is as follows. Synthase catalytic subunit of the trehalose synthase complex that catalyzes the production of trehalose from glucose-6-phosphate and UDP-alpha-D-glucose in a two step process. This is Alpha,alpha-trehalose-phosphate synthase [UDP-forming] from Zygosaccharomyces rouxii.